We begin with the raw amino-acid sequence, 247 residues long: Sugar fermentation stimulation protein homolog (247 aa).

Belongs to the SfsA family.

The chain is Sugar fermentation stimulation protein homolog from Methanococcoides burtonii (strain DSM 6242 / NBRC 107633 / OCM 468 / ACE-M).